Reading from the N-terminus, the 874-residue chain is Probable inorganic carbon transporter subunit DabA (874 aa).

Residues cysteine 398, aspartate 400, histidine 580, and cysteine 595 each contribute to the Zn(2+) site.

It belongs to the inorganic carbon transporter (TC 9.A.2) DabA family. Forms a complex with DabB. The cofactor is Zn(2+).

The protein localises to the cell membrane. Functionally, part of an energy-coupled inorganic carbon pump. The protein is Probable inorganic carbon transporter subunit DabA of Bacillus cereus (strain ATCC 10987 / NRS 248).